The primary structure comprises 210 residues: Probable septum site-determining protein MinC (210 aa).

The protein belongs to the MinC family. In terms of assembly, interacts with MinD and FtsZ.

Cell division inhibitor that blocks the formation of polar Z ring septums. Rapidly oscillates between the poles of the cell to destabilize FtsZ filaments that have formed before they mature into polar Z rings. Prevents FtsZ polymerization. This Thermotoga sp. (strain RQ2) protein is Probable septum site-determining protein MinC.